Here is a 235-residue protein sequence, read N- to C-terminus: Type II secretion system protein N (235 aa).

Residues 1-34 (MIPRRSSDITIKTRSDVLPFSGASSRWLQRYAPA) are Cytoplasmic-facing. A helical; Signal-anchor for type II membrane protein transmembrane segment spans residues 35-55 (LLAVALIIAMSISLAWQAAGW). Residues 56–235 (LRLQRSPVAV…EPTTTPTESD (180 aa)) are Periplasmic-facing. The segment at 205-235 (DALRQQMEATPIAEPAEEDSSEPTTTPTESD) is disordered. The span at 226–235 (EPTTTPTESD) shows a compositional bias: low complexity.

It is found in the cell inner membrane. Functionally, involved in a type II secretion system (T2SS, formerly general secretion pathway, GSP) for the export of proteins. Required for the translocation of a variety of enzymes across the outer membrane. The protein is Type II secretion system protein N (xcpP) of Pseudomonas aeruginosa (strain ATCC 15692 / DSM 22644 / CIP 104116 / JCM 14847 / LMG 12228 / 1C / PRS 101 / PAO1).